The following is a 373-amino-acid chain: Centrosomal protein of 41 kDa (373 aa).

The tract at residues 89–127 (QRLEDNDSATSEPDAEITAKTNGNGSPGEQSPSPVQFIN) is disordered. Phosphoserine is present on residues S96 and S99. Over residues 107-127 (AKTNGNGSPGEQSPSPVQFIN) the composition is skewed to polar residues. A Phosphothreonine modification is found at T109. Phosphoserine occurs at positions 114 and 121. One can recognise a Rhodanese domain in the interval 169–266 (PDCPFLLLDV…LAQKFPEGLI (98 aa)). 2 disordered regions span residues 275-300 (QQALPPGSARKRSSPKVPPLPAENKW) and 315-373 (EEDQ…KPWK). R343 carries the omega-N-methylarginine modification.

Belongs to the CEP41 family. In terms of assembly, found in a complex with TTLL6.

Its subcellular location is the cytoplasm. The protein localises to the cytoskeleton. It localises to the microtubule organizing center. It is found in the centrosome. The protein resides in the cell projection. Its subcellular location is the cilium. The protein localises to the cilium basal body. Required during ciliogenesis for tubulin glutamylation in cilium. Probably acts by participating in the transport of TTLL6, a tubulin polyglutamylase, between the basal body and the cilium. This Bos taurus (Bovine) protein is Centrosomal protein of 41 kDa (CEP41).